Consider the following 857-residue polypeptide: Blue light receptor lreA (857 aa).

PAS domains lie at 306–328 (IIYVSEAFERLTGYTEQEIVGQN), 479–542 (LVEN…TTTD), and 608–642 (LSKSGIVLFMTSKARPVLGRMPDELIGKSLQDLMD). The GATA-type zinc-finger motif lies at 811–836 (CAICQTKKTPEWRRGPSGERDLCNSC).

Its function is as follows. Transcription factor that acts as a blue light sensor. Plays crucial roles in fungal growth and asexual development. Involved in conidiophore formation, sclerotium production, and conidial stress tolerance. Promotes conidiation by inducing the expression of brlA and abaA. Positively regulates the fungal pathogenicity towards maize. In blue light conditions, inhibits aflatoxin B1 (AFB1) biosynthesis by down-regulating the expression of key genes such as aflA, aflJ, aflH, aflO and aflK. The sequence is that of Blue light receptor lreA from Aspergillus flavus.